Reading from the N-terminus, the 480-residue chain is Mannose-1-phosphate guanylyltransferase ManC (480 aa).

It belongs to the mannose-6-phosphate isomerase type 2 family.

It catalyses the reaction alpha-D-mannose 1-phosphate + GTP + H(+) = GDP-alpha-D-mannose + diphosphate. The protein operates within nucleotide-sugar biosynthesis; GDP-alpha-D-mannose biosynthesis; GDP-alpha-D-mannose from alpha-D-mannose 1-phosphate (GTP route): step 1/1. Functionally, involved in the biosynthesis of the capsular polysaccharide colanic acid. The chain is Mannose-1-phosphate guanylyltransferase ManC (manC) from Salmonella typhimurium (strain LT2 / SGSC1412 / ATCC 700720).